The chain runs to 536 residues: Putative UDP-glucuronosyltransferase ugt-47 (536 aa).

Positions 1-21 are cleaved as a signal peptide; it reads MMLQTSTILQLLLFLVGSVSA. Residues N52 and N308 are each glycosylated (N-linked (GlcNAc...) asparagine). A helical transmembrane segment spans residues 497 to 517; the sequence is IIVPVLFVLLYCLIIPFFKLI.

This sequence belongs to the UDP-glycosyltransferase family.

The protein resides in the membrane. The enzyme catalyses glucuronate acceptor + UDP-alpha-D-glucuronate = acceptor beta-D-glucuronoside + UDP + H(+). This is Putative UDP-glucuronosyltransferase ugt-47 (ugt-47) from Caenorhabditis briggsae.